Consider the following 359-residue polypeptide: Aromatic amino acid aminotransferase (359 aa).

The span at Met1–Leu12 shows a compositional bias: basic and acidic residues. The disordered stretch occupies residues Met1–Gly21. Lys223 carries the N6-(pyridoxal phosphate)lysine modification.

This sequence belongs to the class-II pyridoxal-phosphate-dependent aminotransferase family. In terms of assembly, homodimer. It depends on pyridoxal 5'-phosphate as a cofactor.

It catalyses the reaction an aromatic L-alpha-amino acid + 2-oxoglutarate = an aromatic oxo-acid + L-glutamate. Functionally, aminotransferase that catalyzes the conversion of aromatic amino acids and 2-oxoglutarate into corresponding aromatic oxo acids and L-glutamate. The chain is Aromatic amino acid aminotransferase from Streptomyces coelicolor (strain ATCC BAA-471 / A3(2) / M145).